The following is a 108-amino-acid chain: Mitochondrial import inner membrane translocase subunit tim-13 (108 aa).

The short motif at 45-68 (CTNKCITAPGSSLASGEKQCLQRC) is the Twin CX3C motif element. Cystine bridges form between C45/C68 and C49/C64. The interval 89–108 (EEMASSGGMGGGFGQGPSFS) is disordered. Residues 95–108 (GGMGGGFGQGPSFS) show a composition bias toward gly residues.

This sequence belongs to the small Tim family. Heterohexamer; composed of 3 copies of tim-8/ddp-1 and 3 copies of tin-13/tim-13, named soluble 70 kDa complex. Associates with the TIM22 complex, whose core is composed of tim-22.

It localises to the mitochondrion inner membrane. Its function is as follows. Mitochondrial intermembrane chaperone that participates in the import and insertion of some multi-pass transmembrane proteins into the mitochondrial inner membrane. Also required for the transfer of beta-barrel precursors from the TOM complex to the sorting and assembly machinery (SAM complex) of the outer membrane. Acts as a chaperone-like protein that protects the hydrophobic precursors from aggregation and guide them through the mitochondrial intermembrane space. The tim-8-tim-13 complex mediates the import of some proteins while the predominant tim-9/tin-9.1-tim-10/tin-10 70 kDa complex mediates the import of much more proteins. The polypeptide is Mitochondrial import inner membrane translocase subunit tim-13 (tin-13) (Caenorhabditis elegans).